A 303-amino-acid polypeptide reads, in one-letter code: Methionyl-tRNA formyltransferase (303 aa).

111–114 (SLLP) contributes to the (6S)-5,6,7,8-tetrahydrofolate binding site.

Belongs to the Fmt family.

It carries out the reaction L-methionyl-tRNA(fMet) + (6R)-10-formyltetrahydrofolate = N-formyl-L-methionyl-tRNA(fMet) + (6S)-5,6,7,8-tetrahydrofolate + H(+). In terms of biological role, attaches a formyl group to the free amino group of methionyl-tRNA(fMet). The formyl group appears to play a dual role in the initiator identity of N-formylmethionyl-tRNA by promoting its recognition by IF2 and preventing the misappropriation of this tRNA by the elongation apparatus. The chain is Methionyl-tRNA formyltransferase from Ehrlichia canis (strain Jake).